Reading from the N-terminus, the 70-residue chain is DNA gyrase inhibitor YacG (70 aa).

Zn(2+) is bound by residues Cys-21, Cys-24, Cys-36, and Cys-40.

The protein belongs to the DNA gyrase inhibitor YacG family. As to quaternary structure, interacts with GyrB. Zn(2+) is required as a cofactor.

In terms of biological role, inhibits all the catalytic activities of DNA gyrase by preventing its interaction with DNA. Acts by binding directly to the C-terminal domain of GyrB, which probably disrupts DNA binding by the gyrase. This chain is DNA gyrase inhibitor YacG, found in Rhizobium meliloti (strain 1021) (Ensifer meliloti).